Reading from the N-terminus, the 257-residue chain is NAD-dependent protein deacetylase (257 aa).

A Deacetylase sirtuin-type domain is found at 3–252; that stretch reads NGECLEGGRK…DLVLNEVKGI (250 aa). The NAD(+) site is built by alanine 29, threonine 33, phenylalanine 40, arginine 41, glutamine 105, isoleucine 107, aspartate 108, and histidine 123. A nicotinamide-binding site is contributed by phenylalanine 40. Residues isoleucine 107 and aspartate 108 each coordinate nicotinamide. Histidine 123 acts as the Proton acceptor in catalysis. Positions 131, 134, 156, and 159 each coordinate Zn(2+). The NAD(+) site is built by serine 195, serine 196, and asparagine 220.

The protein belongs to the sirtuin family. Class U subfamily. The cofactor is Zn(2+).

It localises to the cytoplasm. It carries out the reaction N(6)-acetyl-L-lysyl-[protein] + NAD(+) + H2O = 2''-O-acetyl-ADP-D-ribose + nicotinamide + L-lysyl-[protein]. Its function is as follows. NAD-dependent protein deacetylase which modulates the activities of several enzymes which are inactive in their acetylated form. Deacetylates the N-terminal lysine residue of Alba, the major archaeal chromatin protein and that, in turn, increases Alba's DNA binding affinity, thereby repressing transcription. In Caldivirga maquilingensis (strain ATCC 700844 / DSM 13496 / JCM 10307 / IC-167), this protein is NAD-dependent protein deacetylase.